The following is a 410-amino-acid chain: Multifunctional CCA protein (410 aa).

The ATP site is built by glycine 8 and arginine 11. CTP-binding residues include glycine 8 and arginine 11. The Mg(2+) site is built by aspartate 21 and aspartate 23. Positions 91, 143, and 146 each coordinate ATP. Arginine 91, arginine 143, and arginine 146 together coordinate CTP. One can recognise an HD domain in the interval 232 to 333 (TGVHVMMVVD…VRLLERSDAI (102 aa)).

The protein belongs to the tRNA nucleotidyltransferase/poly(A) polymerase family. Bacterial CCA-adding enzyme type 1 subfamily. Monomer. Can also form homodimers and oligomers. The cofactor is Mg(2+). Ni(2+) serves as cofactor.

It catalyses the reaction a tRNA precursor + 2 CTP + ATP = a tRNA with a 3' CCA end + 3 diphosphate. It carries out the reaction a tRNA with a 3' CCA end + 2 CTP + ATP = a tRNA with a 3' CCACCA end + 3 diphosphate. Its function is as follows. Catalyzes the addition and repair of the essential 3'-terminal CCA sequence in tRNAs without using a nucleic acid template. Adds these three nucleotides in the order of C, C, and A to the tRNA nucleotide-73, using CTP and ATP as substrates and producing inorganic pyrophosphate. tRNA 3'-terminal CCA addition is required both for tRNA processing and repair. Also involved in tRNA surveillance by mediating tandem CCA addition to generate a CCACCA at the 3' terminus of unstable tRNAs. While stable tRNAs receive only 3'-terminal CCA, unstable tRNAs are marked with CCACCA and rapidly degraded. The protein is Multifunctional CCA protein of Paraburkholderia phytofirmans (strain DSM 17436 / LMG 22146 / PsJN) (Burkholderia phytofirmans).